Reading from the N-terminus, the 775-residue chain is Melanoma-associated antigen D1 (775 aa).

Positions 37 to 330 (SEAPPTSQAT…PARQTPSAWQ (294 aa)) are disordered. A compositionally biased stretch (low complexity) spans 39–50 (APPTSQATAAAS). Composition is skewed to polar residues over residues 52–63 (PNASPQSSQPPT), 84–100 (KAQN…SQAR), 107–120 (KNQS…QNGT), 149–178 (GQNS…NQPK), 221–235 (AQTS…NVES), 247–258 (VNNLNVEENNSG), and 296–308 (LAWQ…QNQT). A run of 19 repeats spans residues 292–297 (WQTPLA), 298–303 (WQNPSG), 304–309 (WQNQTA), 329–334 (WQNPVA), 335–340 (WQNPVI), 341–346 (WPNPVI), 347–352 (WQNPVI), 353–358 (WPNPIV), 359–364 (WPGPIV), 365–370 (WPNPMA), 371–376 (WQSTPG), 377–382 (WQSPPS), 383–388 (WQAPPS), 389–394 (WQSPQD), 395–400 (WQGPPD), 401–406 (WQVPPD), 407–412 (WSMPPD), 413–418 (WSFPSD), and 419–424 (WPFPPD). The tract at residues 292–441 (WQTPLAWQNP…IPPDWQNLRP (150 aa)) is 22 X 6 AA tandem repeats of W-[PQ]-X-P-X-X. Residues 309-326 (ARQTPPAARQSPPARQTP) show a composition bias toward low complexity. The disordered stretch occupies residues 374–409 (TPGWQSPPSWQAPPSWQSPQDWQGPPDWQVPPDWSM). Low complexity predominate over residues 375 to 406 (PGWQSPPSWQAPPSWQSPQDWQGPPDWQVPPD). The 20; approximate repeat unit spans residues 425 to 429 (WIPAD). A run of 2 repeats spans residues 430–435 (WPIPPD) and 436–441 (WQNLRP). Residues 437 to 452 (QNLRPSPNLRSSSNSR) show a composition bias toward low complexity. The tract at residues 437-463 (QNLRPSPNLRSSSNSRASQNQGPPQPR) is disordered. Residues 468-666 (LQERANKLVK…RDWTAQFMEA (199 aa)) form the MAGE domain.

As to quaternary structure, interacts with DLX5, DLX7 and MSX2 and forms homomultimers. Interacts with UNC5A. Interacts with TRIM28 and PJA1. Interacts with NGFR/p75NTR and RORA. In terms of tissue distribution, ubiquitously expressed in many adult tissues, except for the spleen. Expressed in osteoblastic and chondrogenic cell lines and also during embryonic development.

The protein resides in the nucleus. Its subcellular location is the cytoplasm. The protein localises to the cell membrane. In terms of biological role, involved in the apoptotic response after nerve growth factor (NGF) binding in neuronal cells. Inhibits cell cycle progression, and facilitates NGFR-mediated apoptosis. May act as a regulator of the function of DLX family members. May enhance ubiquitin ligase activity of RING-type zinc finger-containing E3 ubiquitin-protein ligases. Proposed to act through recruitment and/or stabilization of the Ubl-conjugating enzyme (E2) at the E3:substrate complex. Plays a role in the circadian rhythm regulation. May act as RORA coregulator, modulating the expression of core clock genes such as BMAL1 and NFIL3, induced, or NR1D1, repressed. In Mus musculus (Mouse), this protein is Melanoma-associated antigen D1 (Maged1).